The sequence spans 455 residues: Bifunctional protein GlmU (455 aa).

Residues 1 to 230 (MANRFAVILA…FDETIGINDR (230 aa)) are pyrophosphorylase. Residues 9–12 (LAAG), Lys23, Gln73, and 78–79 (GT) contribute to the UDP-N-acetyl-alpha-D-glucosamine site. Asp103 serves as a coordination point for Mg(2+). The UDP-N-acetyl-alpha-D-glucosamine site is built by Gly140, Glu155, Asn170, and Asn228. Asn228 is a Mg(2+) binding site. Positions 231–251 (IALAEAEKIMKKRINEQHMRN) are linker. The segment at 252–455 (GVSIIDPEQT…KEEYASKFKK (204 aa)) is N-acetyltransferase. Residues Arg333 and Lys351 each coordinate UDP-N-acetyl-alpha-D-glucosamine. The active-site Proton acceptor is His363. Tyr366 and Asn377 together coordinate UDP-N-acetyl-alpha-D-glucosamine. Acetyl-CoA-binding positions include 386–387 (NY), Ala423, and Arg440.

This sequence in the N-terminal section; belongs to the N-acetylglucosamine-1-phosphate uridyltransferase family. The protein in the C-terminal section; belongs to the transferase hexapeptide repeat family. Homotrimer. It depends on Mg(2+) as a cofactor.

The protein resides in the cytoplasm. It carries out the reaction alpha-D-glucosamine 1-phosphate + acetyl-CoA = N-acetyl-alpha-D-glucosamine 1-phosphate + CoA + H(+). The catalysed reaction is N-acetyl-alpha-D-glucosamine 1-phosphate + UTP + H(+) = UDP-N-acetyl-alpha-D-glucosamine + diphosphate. Its pathway is nucleotide-sugar biosynthesis; UDP-N-acetyl-alpha-D-glucosamine biosynthesis; N-acetyl-alpha-D-glucosamine 1-phosphate from alpha-D-glucosamine 6-phosphate (route II): step 2/2. It participates in nucleotide-sugar biosynthesis; UDP-N-acetyl-alpha-D-glucosamine biosynthesis; UDP-N-acetyl-alpha-D-glucosamine from N-acetyl-alpha-D-glucosamine 1-phosphate: step 1/1. The protein operates within bacterial outer membrane biogenesis; LPS lipid A biosynthesis. Functionally, catalyzes the last two sequential reactions in the de novo biosynthetic pathway for UDP-N-acetylglucosamine (UDP-GlcNAc). The C-terminal domain catalyzes the transfer of acetyl group from acetyl coenzyme A to glucosamine-1-phosphate (GlcN-1-P) to produce N-acetylglucosamine-1-phosphate (GlcNAc-1-P), which is converted into UDP-GlcNAc by the transfer of uridine 5-monophosphate (from uridine 5-triphosphate), a reaction catalyzed by the N-terminal domain. This is Bifunctional protein GlmU from Oceanobacillus iheyensis (strain DSM 14371 / CIP 107618 / JCM 11309 / KCTC 3954 / HTE831).